A 346-amino-acid polypeptide reads, in one-letter code: FAS-associated factor 2 (346 aa).

Lys68 carries the N6-acetyllysine modification. The stretch at Ser176–Leu251 forms a coiled coil. A disordered region spans residues Ala200 to Ser262. Residues Ala204–Glu249 are compositionally biased toward basic and acidic residues. In terms of domain architecture, UBX spans Asp258 to Val340.

In terms of assembly, identified in a complex that contains SEL1L, OS9, FAF2/UBXD8, UBE2J1/UBC6E and AUP1. Interacts with YOD1. Interacts (via N-terminus) with UBQLN2 (via C-terminus). Interacts with PNPLA2 and UBAC2. Interacts with ZFAND2B; probably through VCP. Interacts with LMBR1L.

The protein resides in the cytoplasm. Its subcellular location is the lipid droplet. It is found in the endoplasmic reticulum. Functionally, plays an important role in endoplasmic reticulum-associated degradation (ERAD) that mediates ubiquitin-dependent degradation of misfolded endoplasmic reticulum proteins. By controlling the steady-state expression of the IGF1R receptor, indirectly regulates the insulin-like growth factor receptor signaling pathway. Involved in inhibition of lipid droplet degradation by binding to phospholipase PNPL2 and inhibiting its activity by promoting dissociation of PNPL2 from its endogenous activator, ABHD5 which inhibits the rate of triacylglycerol hydrolysis. Involved in stress granule disassembly: associates with ubiquitinated G3BP1 in response to heat shock, thereby promoting interaction between ubiquitinated G3BP1 and VCP, followed by G3BP1 extraction from stress granules and stress granule disassembly. This Rattus norvegicus (Rat) protein is FAS-associated factor 2 (Faf2).